The primary structure comprises 313 residues: 2,3-dihydroxyphenylpropionate/2,3-dihydroxicinnamic acid 1,2-dioxygenase (313 aa).

Residue His-115 is the Proton donor of the active site. His-179 functions as the Proton acceptor in the catalytic mechanism.

Belongs to the LigB/MhpB extradiol dioxygenase family. As to quaternary structure, homotetramer. Fe(2+) is required as a cofactor.

It catalyses the reaction 3-(2,3-dihydroxyphenyl)propanoate + O2 = (2Z,4E)-2-hydroxy-6-oxonona-2,4-dienedioate + H(+). It carries out the reaction (2E)-3-(2,3-dihydroxyphenyl)prop-2-enoate + O2 = (2Z,4E,7E)-2-hydroxy-6-oxonona-2,4,7-trienedioate + H(+). Its pathway is aromatic compound metabolism; 3-phenylpropanoate degradation. Catalyzes the non-heme iron(II)-dependent oxidative cleavage of 2,3-dihydroxyphenylpropionic acid and 2,3-dihydroxicinnamic acid into 2-hydroxy-6-ketononadienedioate and 2-hydroxy-6-ketononatrienedioate, respectively. This chain is 2,3-dihydroxyphenylpropionate/2,3-dihydroxicinnamic acid 1,2-dioxygenase, found in Mycolicibacterium smegmatis (strain ATCC 700084 / mc(2)155) (Mycobacterium smegmatis).